Reading from the N-terminus, the 286-residue chain is UPF0173 metal-dependent hydrolase RALTA_A1748 (286 aa).

The protein belongs to the UPF0173 family.

This is UPF0173 metal-dependent hydrolase RALTA_A1748 from Cupriavidus taiwanensis (strain DSM 17343 / BCRC 17206 / CCUG 44338 / CIP 107171 / LMG 19424 / R1) (Ralstonia taiwanensis (strain LMG 19424)).